We begin with the raw amino-acid sequence, 376 residues long: Protein FhaE (376 aa).

The first 37 residues, Met1 to Ala37, serve as a signal peptide directing secretion.

This chain is Protein FhaE (fhaE), found in Bordetella pertussis (strain Tohama I / ATCC BAA-589 / NCTC 13251).